The primary structure comprises 307 residues: Aspartate carbamoyltransferase catalytic subunit (307 aa).

Carbamoyl phosphate-binding residues include R54 and T55. Position 83 (K83) interacts with L-aspartate. The carbamoyl phosphate site is built by R104, H132, and Q135. L-aspartate-binding residues include R165 and R228. Carbamoyl phosphate contacts are provided by L267 and P268.

This sequence belongs to the aspartate/ornithine carbamoyltransferase superfamily. ATCase family. Heterododecamer (2C3:3R2) of six catalytic PyrB chains organized as two trimers (C3), and six regulatory PyrI chains organized as three dimers (R2).

It catalyses the reaction carbamoyl phosphate + L-aspartate = N-carbamoyl-L-aspartate + phosphate + H(+). The protein operates within pyrimidine metabolism; UMP biosynthesis via de novo pathway; (S)-dihydroorotate from bicarbonate: step 2/3. Functionally, catalyzes the condensation of carbamoyl phosphate and aspartate to form carbamoyl aspartate and inorganic phosphate, the committed step in the de novo pyrimidine nucleotide biosynthesis pathway. The protein is Aspartate carbamoyltransferase catalytic subunit of Clostridium acetobutylicum (strain ATCC 824 / DSM 792 / JCM 1419 / IAM 19013 / LMG 5710 / NBRC 13948 / NRRL B-527 / VKM B-1787 / 2291 / W).